A 153-amino-acid chain; its full sequence is Prostaglandin E synthase (153 aa).

At 1–13 the chain is on the lumenal side; it reads MPPSGLELMNGQV. The helical transmembrane segment at 14 to 42 threads the bilayer; it reads LPAFLLCSALLVIKMYVVAVITGQVRLRK. Arg39 is a glutathione binding site. Residues 43–61 are Cytoplasmic-facing; that stretch reads KAFANPEDAQRHGGLQYCR. The chain crosses the membrane as a helical span at residues 62–91; the sequence is NDPDVERCLRAHRNDMETIYPFLFLGFVYS. Glutathione is bound at residue 74–78; sequence RNDME. Residues 92-96 are Lumenal-facing; it reads FLGPN. The helical transmembrane segment at 97–120 threads the bilayer; it reads PFVARMHFLVFFLGRMVHTVAYLG. Glutathione contacts are provided by His114 and Tyr118. Residues 121-124 lie on the Cytoplasmic side of the membrane; it reads KLRA. A helical transmembrane segment spans residues 125–153; the sequence is PTRSLAYTLAQLPCASMALQIVWEAARHL. 127 to 131 serves as a coordination point for glutathione; sequence RSLAY.

This sequence belongs to the MAPEG family. Homotrimer. Glutathione is required as a cofactor.

It is found in the membrane. The protein resides in the cytoplasm. Its subcellular location is the perinuclear region. It carries out the reaction prostaglandin H2 = prostaglandin E2. It catalyses the reaction 2-glyceryl-prostaglandin H2 = 2-glyceryl-prostaglandin E2. The catalysed reaction is prostaglandin G2 = (15S)-15-hydroperoxy-prostaglandin E2. The enzyme catalyses 1-chloro-2,4-dinitrobenzene + glutathione = 2,4-dinitrophenyl-S-glutathione + chloride + H(+). It carries out the reaction (5S)-hydroperoxy-(6E,8Z,11Z,14Z)-eicosatetraenoate + 2 glutathione = (5S)-hydroxy-(6E,8Z,11Z,14Z)-eicosatetraenoate + glutathione disulfide + H2O. It functions in the pathway lipid metabolism; prostaglandin biosynthesis. Functionally, terminal enzyme of the cyclooxygenase (COX)-2-mediated prostaglandin E2 (PGE2) biosynthetic pathway. Catalyzes the glutathione-dependent oxidoreduction of prostaglandin endoperoxide H2 (PGH2) to prostaglandin E2 (PGE2) in response to inflammatory stimuli. Plays a key role in inflammation response, fever and pain. Also catalyzes the oxidoreduction of endocannabinoids into prostaglandin glycerol esters and PGG2 into 15-hydroperoxy-PGE2. In addition, displays low glutathione transferase and glutathione-dependent peroxidase activities, toward 1-chloro-2,4-dinitrobenzene and 5-hydroperoxyicosatetraenoic acid (5-HPETE), respectively. This Bos taurus (Bovine) protein is Prostaglandin E synthase (PTGES).